A 451-amino-acid chain; its full sequence is Heat shock factor protein (451 aa).

The DNA-binding element occupies 12–117 (VPAFLAKLWT…LLENIKRKVN (106 aa)). 2 disordered regions span residues 210–273 (LNDS…LEAS) and 285–307 (LTPSQSPEQSPAPPKLDDTPISP). Over residues 232–246 (PSSTSYPVSGFTDSS) the composition is skewed to polar residues.

Belongs to the HSF family. Homotrimer. In terms of processing, exhibits temperature-dependent phosphorylation.

Its subcellular location is the nucleus. Its function is as follows. DNA-binding protein that specifically binds heat shock promoter elements (HSE) and activates transcription. The polypeptide is Heat shock factor protein (hsf1) (Xenopus laevis (African clawed frog)).